Here is a 607-residue protein sequence, read N- to C-terminus: CRISPR-associated DNA-binding protein Cas12m (607 aa).

A wedge domain (WED-N) region spans residues 1–16 (MTRVTVQTAGVHYKWQ). Residues 17–189 (MPDQLTQQLR…QLRHHRWDGT (173 aa)) are recognition domain (REC). The roof in REC stretch occupies residues 50–124 (WSSYPAVAAL…IASVRDEATE (75 aa)). Residues 74-83 (ASTVKEEKSR) show a composition bias toward basic and acidic residues. Residues 74-94 (ASTVKEEKSRQRTKRPSHPAV) are disordered. The tract at residues 190-315 (GTISVQLQRQ…KIPDQGEVDE (126 aa)) is wedge domain (WED-C). Residues 316 to 559 (GPTIAVHLGW…TVSHTGLSRV (244 aa)) are ruvC-I. The segment at 391–452 (SIRDTLVAWL…EGADIAETLE (62 aa)) is ruvC insertion. Residues 552–588 (SHTGLSRVHAACGHENPADDRYLMQPVLCDGCGRTYD) are target nucleic-acid binding (TNB). Histidine 560, cysteine 563, cysteine 580, and cysteine 583 together coordinate Zn(2+). The interval 589 to 607 (TDLSATILMLQRASAATSN) is ruvC-II. Residue aspartate 590 participates in Mg(2+) binding.

Belongs to the CRISPR-associated DNA-binding protein Cas12m family. In terms of assembly, binds crRNA and target dsDNA as a monomer. It depends on Mg(2+) as a cofactor. Requires Zn(2+) as cofactor.

CRISPR (clustered regularly interspaced short palindromic repeat), is an adaptive immune system that provides protection against mobile genetic elements (viruses, transposable elements and conjugative plasmids). CRISPR clusters contain sequences complementary to antecedent mobile elements and target invading nucleic acids. CRISPR clusters are transcribed and processed into CRISPR RNA (crRNA). Recognizes a short motif in the CRISPR repeat sequences (the 5' PAM or protospacer adjacent motif, 5'-TTN-3' in this organism) to help distinguish self versus nonself, as targets within the bacterial CRISPR locus do not have PAMs. Upon expression in E.coli as a CRISPR locus inhibits plasmid propagation when targeted to regions essential for plasmid propagation (replication origin and a selectable marker); inhibits expression of a non-selectable marker, probably at the transcriptional level. Protects E.coli against bacteriophage M13mp18, to a lesser extent against lambda and VpaE1 as well as phage T4 with hydroxymethyl or unmodified (but not glycosylated) cytosines. Preferentially binds to its associated crRNA. Cas12m-crRNA binds DNA in a PAM-dependent, crRNA-guided fashion. Binds a 20-bp crRNA-ss-target DNA heteroduplex, in a 52 nucleotide crRNA. No dsDNA, ssDNA or RNA nuclease activity is seen for the crRNA-Cas12m complex. Probably required for pre-crRNA processing to mature crRNA. In Gordonia otitidis (strain DSM 44809 / CCUG 52243 / JCM 12355 / NBRC 100426 / IFM 10032), this protein is CRISPR-associated DNA-binding protein Cas12m.